A 135-amino-acid polypeptide reads, in one-letter code: Snaclec rhodocetin subunit gamma (135 aa).

Cystine bridges form between cysteine 4–cysteine 15, cysteine 32–cysteine 129, and cysteine 104–cysteine 121. A C-type lectin domain is found at 11-130 (YDQHCYQAFN…CQAKNPFVCK (120 aa)).

This sequence belongs to the snaclec family. Heterotetramer of subunit alpha, beta, gamma and delta; only the gamma and the delta subunits are disulfide-linked. Alpha-beta heterodimer and gamma-delta heterodimer associate orthogonally, giving a cruciform conformation. This heterotetramer may covalently dimerizes thanks to the gamma subunit. Expressed by the venom gland.

It is found in the secreted. Functionally, potent inhibitor of collagen-induced platelet aggregation. It acts by binding to the integrin alpha2A domain and blocks collagen binding to integrin alpha-2/beta-1 (ITGA2/ITGB1). The gamma/delta subunits mainly contribute to this activity. This is Snaclec rhodocetin subunit gamma from Calloselasma rhodostoma (Malayan pit viper).